The primary structure comprises 605 residues: Formin-binding protein 1-like (605 aa).

The 263-residue stretch at 1–263 (MSWGTELWDQ…AAKSVDERRD (263 aa)) folds into the F-BAR domain. Positions 66-258 (FTSCIAFFNI…EGMILAAKSV (193 aa)) form a coiled coil. The segment at 245–535 (SKCLEGMILA…EFDDEFEDDD (291 aa)) is interaction with CDC42. Phosphoserine is present on Ser295. Residues 392–484 (LEDFSHLPPE…VEGKTGIRGD (93 aa)) adopt a coiled-coil conformation. Residues 397–474 (HLPPEQRRKK…IHKNEAWLSE (78 aa)) enclose the REM-1 domain. A disordered region spans residues 482–538 (RGDRRHSSDINHLVTQGRESPEGSYTDDANQEVRGPPQQHGHHSEFDDEFEDDDPLP). A phosphoserine mark is found at Ser488, Ser501, and Ser505. The interaction with DNM1 stretch occupies residues 522–605 (GHHSEFDDEF…VTLEKSSKGS (84 aa)). The segment covering 527 to 536 (FDDEFEDDDP) has biased composition (acidic residues). Positions 538–599 (PAIGHCKAIY…PTTYIDVTLE (62 aa)) constitute an SH3 domain. An interaction with DNM2 and WASL region spans residues 541-597 (GHCKAIYPFDGHNEGTLAMKEGEVLYIIEEDKGDGWTRARRQNGEEGYVPTTYIDVT). Residues 541-605 (GHCKAIYPFD…VTLEKSSKGS (65 aa)) form an interaction with DAAM1, DIAPH1 and DIAPH2 region.

This sequence belongs to the FNBP1 family. In terms of assembly, homodimerizes, the dimers can polymerize end-to-end to form filamentous structures. Interacts with GTP-bound CDC42. Interacts with DAAM1, DIAPH1, DIAPH2, DNM1, DNM2 and WASL/N-WASP. Interacts with ATG3. Interacts (via SH3 domain) with ABI1, WASF2, CDC42 and WIPF1.

It localises to the cytoplasm. The protein resides in the cytoskeleton. The protein localises to the cell cortex. Its subcellular location is the cytoplasmic vesicle. It is found in the cell membrane. Its function is as follows. Required to coordinate membrane tubulation with reorganization of the actin cytoskeleton during endocytosis. May bind to lipids such as phosphatidylinositol 4,5-bisphosphate and phosphatidylserine and promote membrane invagination and the formation of tubules. Also promotes CDC42-induced actin polymerization by activating the WASL-WASPIP complex, the predominant form of WASL/N-WASP in cells. Actin polymerization may promote the fission of membrane tubules to form endocytic vesicles. Essential for autophagy of intracellular bacterial pathogens. In Mus musculus (Mouse), this protein is Formin-binding protein 1-like (Fnbp1l).